Consider the following 299-residue polypeptide: Oxygen-dependent coproporphyrinogen-III oxidase (299 aa).

A substrate-binding site is contributed by serine 92. 2 residues coordinate a divalent metal cation: histidine 96 and histidine 106. Catalysis depends on histidine 106, which acts as the Proton donor. 108-110 (NVR) is a binding site for substrate. A divalent metal cation-binding residues include histidine 145 and histidine 175. The interval 239–274 (YVEFNLVYDRGTLFGLQSGGRAESILMSLPPRVRWE) is important for dimerization. Residue 257-259 (GGR) coordinates substrate.

This sequence belongs to the aerobic coproporphyrinogen-III oxidase family. As to quaternary structure, homodimer. It depends on a divalent metal cation as a cofactor.

The protein resides in the cytoplasm. The enzyme catalyses coproporphyrinogen III + O2 + 2 H(+) = protoporphyrinogen IX + 2 CO2 + 2 H2O. It participates in porphyrin-containing compound metabolism; protoporphyrin-IX biosynthesis; protoporphyrinogen-IX from coproporphyrinogen-III (O2 route): step 1/1. Its function is as follows. Involved in the heme biosynthesis. Catalyzes the aerobic oxidative decarboxylation of propionate groups of rings A and B of coproporphyrinogen-III to yield the vinyl groups in protoporphyrinogen-IX. The polypeptide is Oxygen-dependent coproporphyrinogen-III oxidase (Xanthomonas axonopodis pv. citri (strain 306)).